Here is a 49-residue protein sequence, read N- to C-terminus: Large ribosomal subunit protein bL33B (49 aa).

The protein belongs to the bacterial ribosomal protein bL33 family.

The sequence is that of Large ribosomal subunit protein bL33B from Lacticaseibacillus paracasei (strain ATCC 334 / BCRC 17002 / CCUG 31169 / CIP 107868 / KCTC 3260 / NRRL B-441) (Lactobacillus paracasei).